The chain runs to 115 residues: Large ribosomal subunit protein bL19 (115 aa).

Belongs to the bacterial ribosomal protein bL19 family.

Its function is as follows. This protein is located at the 30S-50S ribosomal subunit interface and may play a role in the structure and function of the aminoacyl-tRNA binding site. This Pectobacterium carotovorum subsp. carotovorum (strain PC1) protein is Large ribosomal subunit protein bL19.